The following is a 138-amino-acid chain: Ostreolysin A6 (138 aa).

The protein belongs to the aegerolysin family. In terms of assembly, monomer.

In terms of biological role, has hemolytic activity against bovine erythrocytes at nanomolar concentrations in vitro. Promotes active pleurotolysin B (PlyB)-dependent permeabilization of membranes rich in cholesterol and sphingomyelin. May play an important role in the initial phase of fungal fruiting. This is Ostreolysin A6 (OlyA6) from Pleurotus ostreatus (Oyster mushroom).